The sequence spans 30 residues: Cyclotide hyen-H (30 aa).

The segment at residues 1–30 (KIPCGESCVYIPCISSVLGCSCSNKVCYKD) is a cross-link (cyclopeptide (Lys-Asp)). Cystine bridges form between cysteine 4–cysteine 20, cysteine 8–cysteine 22, and cysteine 13–cysteine 27.

In terms of processing, this is a cyclic peptide. Detected in stems (at protein level).

Probably participates in a plant defense mechanism. The protein is Cyclotide hyen-H of Pigea enneasperma (Spade flower).